A 501-amino-acid polypeptide reads, in one-letter code: Glycerol kinase (501 aa).

Thr-12 serves as a coordination point for ADP. ATP is bound by residues Thr-12, Thr-13, and Ser-14. Residue Thr-12 participates in sn-glycerol 3-phosphate binding. Arg-16 provides a ligand contact to ADP. Sn-glycerol 3-phosphate contacts are provided by Arg-82, Glu-83, Tyr-135, and Asp-244. Arg-82, Glu-83, Tyr-135, Asp-244, and Gln-245 together coordinate glycerol. Positions 266, 309, 409, and 413 each coordinate ADP. Thr-266, Gly-309, and Gly-409 together coordinate ATP.

It belongs to the FGGY kinase family.

The catalysed reaction is glycerol + ATP = sn-glycerol 3-phosphate + ADP + H(+). The protein operates within polyol metabolism; glycerol degradation via glycerol kinase pathway; sn-glycerol 3-phosphate from glycerol: step 1/1. With respect to regulation, inhibited by fructose 1,6-bisphosphate (FBP). In terms of biological role, key enzyme in the regulation of glycerol uptake and metabolism. Catalyzes the phosphorylation of glycerol to yield sn-glycerol 3-phosphate. This is Glycerol kinase from Coxiella burnetii (strain Dugway 5J108-111).